We begin with the raw amino-acid sequence, 488 residues long: Glutamyl-tRNA(Gln) amidotransferase subunit A (488 aa).

Residues Lys77 and Ser152 each act as charge relay system in the active site. Ser176 serves as the catalytic Acyl-ester intermediate.

The protein belongs to the amidase family. GatA subfamily. As to quaternary structure, heterotrimer of A, B and C subunits.

The enzyme catalyses L-glutamyl-tRNA(Gln) + L-glutamine + ATP + H2O = L-glutaminyl-tRNA(Gln) + L-glutamate + ADP + phosphate + H(+). Its function is as follows. Allows the formation of correctly charged Gln-tRNA(Gln) through the transamidation of misacylated Glu-tRNA(Gln) in organisms which lack glutaminyl-tRNA synthetase. The reaction takes place in the presence of glutamine and ATP through an activated gamma-phospho-Glu-tRNA(Gln). This Streptococcus pneumoniae (strain ATCC 700669 / Spain 23F-1) protein is Glutamyl-tRNA(Gln) amidotransferase subunit A.